We begin with the raw amino-acid sequence, 194 residues long: A-type ATP synthase subunit E (194 aa).

The protein belongs to the V-ATPase E subunit family. As to quaternary structure, has multiple subunits with at least A(3), B(3), C, D, E, F, H, I and proteolipid K(x).

Its subcellular location is the cell membrane. Component of the A-type ATP synthase that produces ATP from ADP in the presence of a proton gradient across the membrane. The polypeptide is A-type ATP synthase subunit E (Saccharolobus solfataricus (strain ATCC 35092 / DSM 1617 / JCM 11322 / P2) (Sulfolobus solfataricus)).